Reading from the N-terminus, the 1849-residue chain is Mitogen-activated protein kinase kinase kinase mkh1 (1849 aa).

Residues 1556–1825 (WFKGQLIGKG…TKLLAEHPFC (270 aa)) form the Protein kinase domain. Residues 1562 to 1570 (IGKGTYGRV) and Lys1585 each bind ATP. The Proton acceptor role is filled by Asp1686.

The protein belongs to the protein kinase superfamily. STE Ser/Thr protein kinase family. MAP kinase kinase kinase subfamily.

The catalysed reaction is L-seryl-[protein] + ATP = O-phospho-L-seryl-[protein] + ADP + H(+). The enzyme catalyses L-threonyl-[protein] + ATP = O-phospho-L-threonyl-[protein] + ADP + H(+). Functionally, mitogen-activated protein kinase kinase kinase, part of the mkh1-mkk1-spm1 MAPK cascade that regulates vegetative growth, conidial formation, colony surface hydrophobicity, osmotic stress, cell wall integrity maintenance, carbon and nitrogen source utilization, chitin distribution, septa formation, and pathogenicity. This is Mitogen-activated protein kinase kinase kinase mkh1 from Cytospora mali (Apple Valsa canker fungus).